Reading from the N-terminus, the 246-residue chain is Transmembrane and ubiquitin-like domain-containing protein 1 (246 aa).

The interval 2–30 (ALIEGVGDEVTILFSALACLLVLALAWVS) is required to release iHOPS from membranes. The chain crosses the membrane as a helical span at residues 11 to 31 (VTILFSALACLLVLALAWVST). A disordered region spans residues 35-102 (EGADPLPQPS…PPPPDSPQEP (68 aa)). Pro residues predominate over residues 40–50 (LPQPSGTPTPT). Phosphothreonine is present on residues Thr-71 and Thr-92. 2 positions are modified to phosphoserine: Ser-98 and Ser-127. Residues 103–176 (LVLRLKFLND…LHCHVSTRVG (74 aa)) enclose the Ubiquitin-like domain. Helical transmembrane passes span 195 to 215 (VGSL…YCQI) and 221 to 241 (FPLT…LLAF).

As to quaternary structure, interacts with EEF1A1, GRIA2, GRIP1, CAMLG, TUBG1. Interacts with NPM1 and CDKN2A; TMUB1 can enhance interaction between NPM1 and CDKN2A and is proposed to bridge the proteins; proposed to be mediated by iHOPS. Interacts with ERLIN2 and AMFR; TMUB1 promotes the interaction of ERLIN2 with AMFR. Processed by regulated intramembrane proteolysis (RIP) in the N-terminus to release iHOPS from membranes.

It localises to the membrane. The protein resides in the postsynaptic cell membrane. It is found in the recycling endosome. Its subcellular location is the cytoplasm. The protein localises to the nucleus. It localises to the nucleolus. The protein resides in the cytoskeleton. It is found in the microtubule organizing center. Its subcellular location is the centrosome. Involved in sterol-regulated ubiquitination and degradation of HMG-CoA reductase HMGCR. Involved in positive regulation of AMPA-selective glutamate receptor GRIA2 recycling to the cell surface. Acts as negative regulator of hepatocyte growth during regeneration. Its function is as follows. May contribute to the regulation of translation during cell-cycle progression. May contribute to the regulation of cell proliferation. May be involved in centrosome assembly. Modulates stabilization and nucleolar localization of tumor suppressor CDKN2A and enhances association between CDKN2A and NPM1. The polypeptide is Transmembrane and ubiquitin-like domain-containing protein 1 (TMUB1) (Bos taurus (Bovine)).